The chain runs to 27 residues: Caerulein precursor fragment R7 (27 aa).

In terms of tissue distribution, expressed by the skin glands.

Its subcellular location is the secreted. In terms of biological role, antimicrobial peptide. The chain is Caerulein precursor fragment R7 from Xenopus ruwenzoriensis (Uganda clawed frog).